Here is a 334-residue protein sequence, read N- to C-terminus: O-methyltransferase SfmM3 (334 aa).

Residues D190 and 216-218 (GDF) contribute to the S-adenosyl-L-methionine site. Catalysis depends on H236, which acts as the Proton acceptor.

It belongs to the class I-like SAM-binding methyltransferase superfamily. Cation-independent O-methyltransferase family. COMT subfamily.

It catalyses the reaction 5-hydroxy-3-methyl-L-tyrosine + S-adenosyl-L-methionine = 5-hydroxy-3-methyl-O-methyl-L-tyrosine + S-adenosyl-L-homocysteine + H(+). The protein operates within antibiotic biosynthesis. O-methyltransferase that mediates the methylation of 3-hydroxy-5-methyl-L-tyrosine (3-OH-5-Me-Tyr) into 3-hydroxy-5-methyl-O-methyltyrosine (3-OH-5-Me-OMe-Tyr), a core structure of saframycin A, a potent antitumor antibiotic that belongs to the tetrahydroisoquinoline family. In Streptomyces lavendulae, this protein is O-methyltransferase SfmM3.